Reading from the N-terminus, the 1388-residue chain is Kinesin-like protein KIF15-A (1388 aa).

In terms of domain architecture, Kinesin motor spans 26-364; sequence AIKVFVRIRP…LQFAQRAKLI (339 aa). Residue 110–117 coordinates ATP; the sequence is GQTGSGKT. Residues 369–1383 adopt a coiled-coil conformation; it reads VVNEDTQGNV…ENLFLKESKK (1015 aa). The tract at residues 1127–1156 is disordered; that stretch reads EQEKIRPASSNSSSPVVLPETPRTPEGNPY. The segment at 1139–1388 is necessary for its targeting to microtubule minus ends; sequence SSPVVLPETP…KESKKCEHCN (250 aa).

This sequence belongs to the TRAFAC class myosin-kinesin ATPase superfamily. Kinesin family. KLP2 subfamily. Homodimer. Dimerization is required for targeting to microtubule minus ends. Found in a complex with tpx2 and microtubules. Its association with microtubules and targeting to microtubule minus ends requires tpx2. Strongly expressed in testis and weakly in lung (at protein level).

It is found in the cytoplasm. It localises to the cytoskeleton. The protein localises to the microtubule organizing center. Its subcellular location is the centrosome. The protein resides in the spindle. It is found in the spindle pole. Functionally, plus-end directed kinesin-like motor enzyme involved in mitotic spindle assembly. Required for centrosome separation and maintenance of spindle bipolarity during mitosis. In Xenopus laevis (African clawed frog), this protein is Kinesin-like protein KIF15-A (kif15-a).